Here is a 260-residue protein sequence, read N- to C-terminus: Proteasome subunit alpha type-1 (260 aa).

The interval 240–260 is disordered; that stretch reads PRTTGGAAAAAAPGGAEPMQM. Over residues 244 to 260 the composition is skewed to low complexity; the sequence is GGAAAAAAPGGAEPMQM.

It belongs to the peptidase T1A family. In terms of assembly, the 26S proteasome consists of a 20S proteasome core and two 19S regulatory subunits. The 20S proteasome core is composed of 28 subunits that are arranged in four stacked rings, resulting in a barrel-shaped structure. The two end rings are each formed by seven alpha subunits, and the two central rings are each formed by seven beta subunits. The catalytic chamber with the active sites is on the inside of the barrel.

Its subcellular location is the cytoplasm. It localises to the nucleus. Its function is as follows. The proteasome is a multicatalytic proteinase complex which is characterized by its ability to cleave peptides with Arg, Phe, Tyr, Leu, and Glu adjacent to the leaving group at neutral or slightly basic pH. The proteasome has an ATP-dependent proteolytic activity. The protein is Proteasome subunit alpha type-1 (pas-6) of Caenorhabditis elegans.